A 68-amino-acid chain; its full sequence is Large ribosomal subunit protein bL28 (68 aa).

Residues Met-1–Glu-30 form a disordered region. Over residues Gln-13–Asn-22 the composition is skewed to polar residues.

This sequence belongs to the bacterial ribosomal protein bL28 family.

The protein is Large ribosomal subunit protein bL28 of Solidesulfovibrio magneticus (strain ATCC 700980 / DSM 13731 / RS-1) (Desulfovibrio magneticus).